The primary structure comprises 142 residues: MKHGIKKRKLSRCTEHRLSTLKNLSISLINHEQIVTTLPKAKELRPYVEKFITIAKNKNTLHGRRLLLSRLHNSKLAVDKLLNVLASRYQDRKGGYSRIIKFSTRKGDCASMAVIELVDRDIAARGKVYSKNKEGGKVVTQS.

The protein belongs to the bacterial ribosomal protein bL17 family. In terms of assembly, part of the 50S ribosomal subunit. Contacts protein L32.

The protein is Large ribosomal subunit protein bL17 of Wolbachia pipientis wMel.